We begin with the raw amino-acid sequence, 426 residues long: Tyrosine--tRNA ligase (426 aa).

An L-tyrosine-binding site is contributed by Tyr37. A 'HIGH' region motif is present at residues 42 to 51; it reads PTADSLHLGH. L-tyrosine-binding residues include Tyr175 and Gln179. The short motif at 235–239 is the 'KMSKS' region element; that stretch reads KFGKT. Lys238 lines the ATP pocket. The region spanning 357-415 is the S4 RNA-binding domain; sequence TDLMQALVESELQPSRGQARKAIAANGVTVNGIKQPDPDYVLNENDRYFSNYTLLRRGK.

It belongs to the class-I aminoacyl-tRNA synthetase family. TyrS type 1 subfamily. In terms of assembly, homodimer.

It localises to the cytoplasm. The catalysed reaction is tRNA(Tyr) + L-tyrosine + ATP = L-tyrosyl-tRNA(Tyr) + AMP + diphosphate + H(+). Its function is as follows. Catalyzes the attachment of tyrosine to tRNA(Tyr) in a two-step reaction: tyrosine is first activated by ATP to form Tyr-AMP and then transferred to the acceptor end of tRNA(Tyr). This is Tyrosine--tRNA ligase from Klebsiella pneumoniae (strain 342).